The following is a 267-amino-acid chain: Type II pantothenate kinase (267 aa).

6-13 is a binding site for ATP; that stretch reads DAGGTLIK. Glu70 serves as the catalytic Proton acceptor. ATP is bound by residues Thr99, 121 to 125, Tyr137, and Ser225; that span reads GGMIQ.

The protein belongs to the type II pantothenate kinase family. In terms of assembly, homodimer.

The protein localises to the cytoplasm. It carries out the reaction (R)-pantothenate + ATP = (R)-4'-phosphopantothenate + ADP + H(+). It functions in the pathway cofactor biosynthesis; coenzyme A biosynthesis; CoA from (R)-pantothenate: step 1/5. Functionally, catalyzes the phosphorylation of pantothenate (Pan), the first step in CoA biosynthesis. The sequence is that of Type II pantothenate kinase from Staphylococcus aureus (strain Mu50 / ATCC 700699).